A 278-amino-acid polypeptide reads, in one-letter code: Dermonecrotic toxin LlSicTox-alphaIII3ii (278 aa).

H5 is an active-site residue. The Mg(2+) site is built by E25 and D27. H40 (nucleophile) is an active-site residue. C44 and C50 are disulfide-bonded. D84 lines the Mg(2+) pocket.

It belongs to the arthropod phospholipase D family. Class I subfamily. Requires Mg(2+) as cofactor. In terms of tissue distribution, expressed by the venom gland.

It is found in the secreted. The catalysed reaction is an N-(acyl)-sphingosylphosphocholine = an N-(acyl)-sphingosyl-1,3-cyclic phosphate + choline. It catalyses the reaction an N-(acyl)-sphingosylphosphoethanolamine = an N-(acyl)-sphingosyl-1,3-cyclic phosphate + ethanolamine. The enzyme catalyses a 1-acyl-sn-glycero-3-phosphocholine = a 1-acyl-sn-glycero-2,3-cyclic phosphate + choline. It carries out the reaction a 1-acyl-sn-glycero-3-phosphoethanolamine = a 1-acyl-sn-glycero-2,3-cyclic phosphate + ethanolamine. In terms of biological role, dermonecrotic toxins cleave the phosphodiester linkage between the phosphate and headgroup of certain phospholipids (sphingolipid and lysolipid substrates), forming an alcohol (often choline) and a cyclic phosphate. This toxin acts on sphingomyelin (SM). It may also act on ceramide phosphoethanolamine (CPE), lysophosphatidylcholine (LPC) and lysophosphatidylethanolamine (LPE), but not on lysophosphatidylserine (LPS), and lysophosphatidylglycerol (LPG). It acts by transphosphatidylation, releasing exclusively cyclic phosphate products as second products. Induces dermonecrosis, hemolysis, increased vascular permeability, edema, inflammatory response, and platelet aggregation. The sequence is that of Dermonecrotic toxin LlSicTox-alphaIII3ii from Loxosceles laeta (South American recluse spider).